The following is a 353-amino-acid chain: Ig alpha-1 chain C region (353 aa).

An Ig-like 1 domain is found at 6–98 (PKVFPLSLCS…HYTNPSQDVT (93 aa)). 2 cysteine pairs are disulfide-bonded: cysteine 26-cysteine 85 and cysteine 77-cysteine 101. Residues 96 to 121 (DVTVPCRVPSTPPTPSPSTPPTPSPP) form a disordered region. Residues 105 to 121 (STPPTPSPSTPPTPSPP) show a composition bias toward pro residues. Disulfide bonds link cysteine 123-cysteine 180, cysteine 147-cysteine 204, and cysteine 250-cysteine 313. Ig-like domains are found at residues 125–220 (PRLS…ATLS) and 228–330 (PEVH…KTID). Asparagine 144 is a glycosylation site (N-linked (GlcNAc...) asparagine). Asparagine 340 carries N-linked (GlcNAc...) asparagine glycosylation. A 3-hydroxy-L-kynurenine-binding site is contributed by cysteine 352.

Monomeric or polymeric. In terms of processing, 3-Hydroxykynurenine, an oxidized tryptophan metabolite that is common in biological fluids, reacts with alpha-1-microglobulin to form heterogeneous polycyclic chromophores including hydroxanthommatin. The chromophore reacts with accessible cysteines forming non-reducible thioether cross-links with Ig alpha-1 chain C region Cys-352.

Its function is as follows. Ig alpha is the major immunoglobulin class in body secretions. It may serve both to defend against local infection and to prevent access of foreign antigens to the general immunologic system. In Gorilla gorilla gorilla (Western lowland gorilla), this protein is Ig alpha-1 chain C region (IGHA1).